Reading from the N-terminus, the 156-residue chain is ATP synthase subunit b (156 aa).

A helical transmembrane segment spans residues 7–27 (LIGQTVAFIIFVWFCMKFVWP).

It belongs to the ATPase B chain family. In terms of assembly, F-type ATPases have 2 components, F(1) - the catalytic core - and F(0) - the membrane proton channel. F(1) has five subunits: alpha(3), beta(3), gamma(1), delta(1), epsilon(1). F(0) has three main subunits: a(1), b(2) and c(10-14). The alpha and beta chains form an alternating ring which encloses part of the gamma chain. F(1) is attached to F(0) by a central stalk formed by the gamma and epsilon chains, while a peripheral stalk is formed by the delta and b chains.

Its subcellular location is the cell inner membrane. Functionally, f(1)F(0) ATP synthase produces ATP from ADP in the presence of a proton or sodium gradient. F-type ATPases consist of two structural domains, F(1) containing the extramembraneous catalytic core and F(0) containing the membrane proton channel, linked together by a central stalk and a peripheral stalk. During catalysis, ATP synthesis in the catalytic domain of F(1) is coupled via a rotary mechanism of the central stalk subunits to proton translocation. In terms of biological role, component of the F(0) channel, it forms part of the peripheral stalk, linking F(1) to F(0). This chain is ATP synthase subunit b, found in Shewanella sp. (strain ANA-3).